A 447-amino-acid chain; its full sequence is Probable glycine dehydrogenase (decarboxylating) subunit 1 (447 aa).

This sequence belongs to the GcvP family. N-terminal subunit subfamily. As to quaternary structure, the glycine cleavage system is composed of four proteins: P, T, L and H. In this organism, the P 'protein' is a heterodimer of two subunits.

The catalysed reaction is N(6)-[(R)-lipoyl]-L-lysyl-[glycine-cleavage complex H protein] + glycine + H(+) = N(6)-[(R)-S(8)-aminomethyldihydrolipoyl]-L-lysyl-[glycine-cleavage complex H protein] + CO2. In terms of biological role, the glycine cleavage system catalyzes the degradation of glycine. The P protein binds the alpha-amino group of glycine through its pyridoxal phosphate cofactor; CO(2) is released and the remaining methylamine moiety is then transferred to the lipoamide cofactor of the H protein. The protein is Probable glycine dehydrogenase (decarboxylating) subunit 1 of Bacillus cereus (strain ATCC 10987 / NRS 248).